A 327-amino-acid polypeptide reads, in one-letter code: MIYQMQMPAKIELDESSHSDSFGKFIAQPLERGYGVTLGNLMRRVLLASLPGTAITGIKIENVYHEFSTIQGVREDVPEIVLNLKKVRFRSQCKRSCKTTVTLVGPMEFTAGVIQPQEGEFEVLNKDLHIATINAGTTVTLDIFIGRGRGYVPAEENRAEGMPLGFIPIDSIFTPIRNVKFTVENTRVGQRTDYEKMILEVETDGSITPDDSISLAGRVISDHVLLFADFSPAEEEYTEEEFKQQDDEFETMRRLLATKIEDLDLSVRSHNCLRLAEIDTLGELVSHKEDELLNYKNFGKKSLTELKEQLDKFDLKFGMDITRYQMK.

The alpha N-terminal domain (alpha-NTD) stretch occupies residues 1–231 (MIYQMQMPAK…DHVLLFADFS (231 aa)). The segment at 247 to 327 (DEFETMRRLL…GMDITRYQMK (81 aa)) is alpha C-terminal domain (alpha-CTD).

This sequence belongs to the RNA polymerase alpha chain family. As to quaternary structure, homodimer. The RNAP catalytic core consists of 2 alpha, 1 beta, 1 beta' and 1 omega subunit. When a sigma factor is associated with the core the holoenzyme is formed, which can initiate transcription.

It carries out the reaction RNA(n) + a ribonucleoside 5'-triphosphate = RNA(n+1) + diphosphate. Functionally, DNA-dependent RNA polymerase catalyzes the transcription of DNA into RNA using the four ribonucleoside triphosphates as substrates. In Chlorobium chlorochromatii (strain CaD3), this protein is DNA-directed RNA polymerase subunit alpha.